Here is a 21-residue protein sequence, read N- to C-terminus: VSYNSKFLAATVQAEPVVLDA.

This sequence belongs to the carbon-nitrogen hydrolase superfamily. Nitrilase family.

The catalysed reaction is a nitrile + 2 H2O = a carboxylate + NH4(+). Its function is as follows. Acts on many kinds of nitrile compounds such as aliphatic, aromatic, and heterocyclic mononitriles or dinitriles. Prefers S-(-)-2-(4'-isobutylphenyl)-propionitrile to R-(+)-2-(4'-isobutylphenyl)-propionitrile as the substrate. This Acinetobacter sp. (strain AK226) protein is Nitrilase.